Consider the following 551-residue polypeptide: MTSAVPYDPYDDLDNNPFAEPQEEDSEPAATTTDGSSSMSEERVGTEQTAASVQDNGTANNIQNGLGEEGNATRSKTSNEHNENQQPSQPSERVILPERSDEKKKYTLLAKVTGLERFGSATGKKENPTIIFDCSTNLPTFRKQQYKNVKKSYEEFHQLFKYLNVAIQESFVPTLPSAYTTFGINSEEDRMKVTRNFQLWFNRLSQDPLIIRNEEVAFFIESDFNTYTPINKSKSLASGLKRKTLKQLAPPYDEITELAEFRPLVKSIYVVSQSLQEKLLRVSRNRKMMVQEENAFGQDFVNLDEHNKLYRRYGKILTAVGDIDSIIATMDMATLYDGLEWIVRDAYAVKEALTNRHFIMRNLVQAQQNSKAKQEQARRFRSRRDINPMKIDEALRQLKAAAKNEQVLTLKLQRITSNMIIERKQWISWYEEWIRSSIKEFTLRKIEYERKKLTLLERVRSDIRKADENGGLSRLGRHAVSNNNSDTSQTLKGDSWTGESNRKSQIPINKIAHTEFDDELFTEDDGYNSQDSDTTSLNARHAASLLGMSTK.

The interval 1–100 is disordered; the sequence is MTSAVPYDPY…SERVILPERS (100 aa). Polar residues-rich tracts occupy residues 29–39 and 46–64; these read AATTTDGSSSM and TEQTAASVQDNGTANNIQN. Residues 108-227 form the PX domain; it reads LLAKVTGLER…FFIESDFNTY (120 aa). Positions 359 to 385 form a coiled coil; that stretch reads IMRNLVQAQQNSKAKQEQARRFRSRRD. The segment at 474–504 is disordered; the sequence is RLGRHAVSNNNSDTSQTLKGDSWTGESNRKS. Over residues 480–504 the composition is skewed to polar residues; it reads VSNNNSDTSQTLKGDSWTGESNRKS. Ser544 carries the phosphoserine modification.

It belongs to the VPS17 family. In terms of assembly, component of the retromer complex which consists of VPS29, VPS26, VPS35, VPS5 and VPS17. Component of a retromer subcomplex consisting of VPS5 and VPS17. In terms of processing, phosphorylated on one or more serine residues.

Its subcellular location is the endomembrane system. Functionally, component of the membrane-associated retromer complex which is essential in endosome-to-Golgi retrograde transport. The VPS5-VPS17 subcomplex may assemble onto the membrane to promote vesicle formation and is required for recycling the vacuolar protein-sorting receptor. Required for the sorting and delivery of a subset of soluble vacuolar hydrolases. Required for retention of late Golgi membrane proteins and vacuolar biogenesis. Involved in vacuolar fragmentation during hyperosmotic stress. The protein is Vacuolar protein sorting-associated protein 17 of Saccharomyces cerevisiae (strain ATCC 204508 / S288c) (Baker's yeast).